A 95-amino-acid polypeptide reads, in one-letter code: Small ribosomal subunit protein bS18 (95 aa).

The protein belongs to the bacterial ribosomal protein bS18 family. Part of the 30S ribosomal subunit. Forms a tight heterodimer with protein bS6.

In terms of biological role, binds as a heterodimer with protein bS6 to the central domain of the 16S rRNA, where it helps stabilize the platform of the 30S subunit. The polypeptide is Small ribosomal subunit protein bS18 (Rickettsia prowazekii (strain Madrid E)).